A 215-amino-acid chain; its full sequence is uncharacterized protein (215 aa).

The S-adenosyl-L-methionine site is built by Gly53, Glu74, and Asp97.

Belongs to the methyltransferase superfamily. YrrT family.

Its function is as follows. Could be a S-adenosyl-L-methionine-dependent methyltransferase. This is an uncharacterized protein from Geobacillus thermodenitrificans (strain NG80-2).